The primary structure comprises 500 residues: Beta-glucosidase 2 (500 aa).

The signal sequence occupies residues 1 to 24 (MGAAAAAGFFFVLLFLSVQGGAVG). Glutamine 44 and histidine 144 together coordinate a beta-D-glucoside. Glutamate 190 serves as the catalytic Proton donor. Cysteine 209 and cysteine 218 are disulfide-bonded. Residue asparagine 222 is glycosylated (N-linked (GlcNAc...) asparagine). The a beta-D-glucoside site is built by tyrosine 334 and glutamate 403. Glutamate 403 functions as the Nucleophile in the catalytic mechanism. N-linked (GlcNAc...) asparagine glycosylation occurs at asparagine 410. An a beta-D-glucoside-binding site is contributed by tryptophan 445.

Belongs to the glycosyl hydrolase 1 family.

It carries out the reaction Hydrolysis of terminal, non-reducing beta-D-glucosyl residues with release of beta-D-glucose.. The polypeptide is Beta-glucosidase 2 (BGLU2) (Oryza sativa subsp. japonica (Rice)).